The primary structure comprises 274 residues: Putative pyruvate, phosphate dikinase regulatory protein (274 aa).

Residue 149–156 (GVSRSSKT) participates in ADP binding.

It belongs to the pyruvate, phosphate/water dikinase regulatory protein family. PDRP subfamily.

It catalyses the reaction N(tele)-phospho-L-histidyl/L-threonyl-[pyruvate, phosphate dikinase] + ADP = N(tele)-phospho-L-histidyl/O-phospho-L-threonyl-[pyruvate, phosphate dikinase] + AMP + H(+). The catalysed reaction is N(tele)-phospho-L-histidyl/O-phospho-L-threonyl-[pyruvate, phosphate dikinase] + phosphate + H(+) = N(tele)-phospho-L-histidyl/L-threonyl-[pyruvate, phosphate dikinase] + diphosphate. Its function is as follows. Bifunctional serine/threonine kinase and phosphorylase involved in the regulation of the pyruvate, phosphate dikinase (PPDK) by catalyzing its phosphorylation/dephosphorylation. The sequence is that of Putative pyruvate, phosphate dikinase regulatory protein from Rhizorhabdus wittichii (strain DSM 6014 / CCUG 31198 / JCM 15750 / NBRC 105917 / EY 4224 / RW1) (Sphingomonas wittichii).